The sequence spans 505 residues: Cobyric acid synthase (505 aa).

The GATase cobBQ-type domain maps to 260–453 (RIAVAAIYFP…FHGIIDEPEV (194 aa)). Catalysis depends on Cys-341, which acts as the Nucleophile. His-445 is a catalytic residue.

This sequence belongs to the CobB/CobQ family. CobQ subfamily.

It functions in the pathway cofactor biosynthesis; adenosylcobalamin biosynthesis. Its function is as follows. Catalyzes amidations at positions B, D, E, and G on adenosylcobyrinic A,C-diamide. NH(2) groups are provided by glutamine, and one molecule of ATP is hydrogenolyzed for each amidation. The protein is Cobyric acid synthase of Chlorobium phaeobacteroides (strain DSM 266 / SMG 266 / 2430).